The primary structure comprises 154 residues: Endoribonuclease YbeY (154 aa).

3 residues coordinate Zn(2+): H116, H120, and H126.

The protein belongs to the endoribonuclease YbeY family. It depends on Zn(2+) as a cofactor.

The protein localises to the cytoplasm. Single strand-specific metallo-endoribonuclease involved in late-stage 70S ribosome quality control and in maturation of the 3' terminus of the 16S rRNA. In Buchnera aphidicola subsp. Baizongia pistaciae (strain Bp), this protein is Endoribonuclease YbeY.